A 416-amino-acid polypeptide reads, in one-letter code: Cytochrome P450 monooxygenase PikC (416 aa).

Substrate is bound by residues Glu-94, 187–191 (AQTAM), and 238–246 (HILLVAGHE). Cys-354 contacts heme.

Belongs to the cytochrome P450 family. It depends on heme as a cofactor.

It catalyses the reaction narbomycin + 2 reduced [2Fe-2S]-[ferredoxin] + O2 + 2 H(+) = pikromycin + 2 oxidized [2Fe-2S]-[ferredoxin] + H2O. The enzyme catalyses narbomycin + 2 reduced [2Fe-2S]-[ferredoxin] + O2 + 2 H(+) = neopikromycin + 2 oxidized [2Fe-2S]-[ferredoxin] + H2O. It carries out the reaction narbomycin + 4 reduced [2Fe-2S]-[ferredoxin] + 2 O2 + 4 H(+) = novapikromycin + 4 oxidized [2Fe-2S]-[ferredoxin] + 2 H2O. The catalysed reaction is 10-deoxymethymycin + 2 reduced [2Fe-2S]-[ferredoxin] + O2 + 2 H(+) = methymycin + 2 oxidized [2Fe-2S]-[ferredoxin] + H2O. It catalyses the reaction 10-deoxymethymycin + 2 reduced [2Fe-2S]-[ferredoxin] + O2 + 2 H(+) = neomethymycin + 2 oxidized [2Fe-2S]-[ferredoxin] + H2O. The enzyme catalyses 10-deoxymethymycin + 4 reduced [2Fe-2S]-[ferredoxin] + 2 O2 + 4 H(+) = novamethymycin + 4 oxidized [2Fe-2S]-[ferredoxin] + 2 H2O. It participates in antibiotic biosynthesis. In terms of biological role, catalyzes the hydroxylation of narbomycin to give rise to pikromycin, and of 10-deoxymethymycin (YC-17) to give rise to methymycin and neomethymycin during macrolide antibiotic biosynthesis. In addition, produces low amounts of neopicromycin, novapikromycin and novamethymycin. Requires the participation of a ferredoxin and a ferredoxin reductase for the transfer of electrons from NADPH to the monooxygenase. In Streptomyces venezuelae, this protein is Cytochrome P450 monooxygenase PikC.